The following is a 402-amino-acid chain: Cytochrome b561 and DOMON domain-containing protein At4g17280 (402 aa).

The first 31 residues, Met-1–Ala-31, serve as a signal peptide directing secretion. Positions Leu-54–Gly-171 constitute a DOMON domain. A Cytochrome b561 domain is found at Thr-183 to Ile-379. Transmembrane regions (helical) follow at residues Ile-218 to Ala-238 and Ala-250 to Trp-270. Residues His-219, His-255, and His-288 each contribute to the heme b site. Residues Ala-290–Pro-310 form a helical membrane-spanning segment. Residue His-324 participates in heme b binding. Helical transmembrane passes span Thr-326–Leu-346 and Ile-359–Ile-379.

Heme b serves as cofactor.

It is found in the membrane. May act as a catecholamine-responsive trans-membrane electron transporter. The sequence is that of Cytochrome b561 and DOMON domain-containing protein At4g17280 from Arabidopsis thaliana (Mouse-ear cress).